The following is a 436-amino-acid chain: UPF0597 protein YhaM (436 aa).

The protein belongs to the UPF0597 family.

This is UPF0597 protein YhaM from Escherichia coli O45:K1 (strain S88 / ExPEC).